The following is a 109-amino-acid chain: Small ribosomal subunit protein uS10 (109 aa).

The protein belongs to the universal ribosomal protein uS10 family. In terms of assembly, part of the 30S ribosomal subunit.

Its function is as follows. Involved in the binding of tRNA to the ribosomes. The polypeptide is Small ribosomal subunit protein uS10 (Wolbachia pipientis wMel).